We begin with the raw amino-acid sequence, 96 residues long: Large ribosomal subunit protein bL21 (96 aa).

The protein belongs to the bacterial ribosomal protein bL21 family. As to quaternary structure, part of the 50S ribosomal subunit. Contacts protein L20.

Functionally, this protein binds to 23S rRNA in the presence of protein L20. In Hydrogenobaculum sp. (strain Y04AAS1), this protein is Large ribosomal subunit protein bL21.